Reading from the N-terminus, the 820-residue chain is Serine/threonine-protein phosphatase 4 regulatory subunit 3B (820 aa).

The WH1 domain maps to 1 to 100 (MSDTRRRVKV…DEIWEKICQV (100 aa)). Serine 117 and serine 663 each carry phosphoserine. The interval 687–820 (EDDDEEGKAV…SPRKRPRLGS (134 aa)) is disordered. A compositionally biased stretch (basic and acidic residues) spans 701 to 732 (EKSKTEDDFPDSYEKFMETKKAKESEDKENLP). The segment covering 744–789 (FSHSPSATNGTNSTNSKSVVSQTTPASSNVASSKTTSLATSVTATK) has biased composition (polar residues). The span at 798–809 (YPDDEEEDEEEE) shows a compositional bias: acidic residues. Serine 811 is modified (phosphoserine).

This sequence belongs to the SMEK family. As to quaternary structure, serine/threonine-protein phosphatase 4 (PP4) occurs in different assemblies of the catalytic and one or more regulatory subunits. Component of the PP4 complex PPP4C-PPP4R2-PPP4R3B.

It localises to the cytoplasm. It is found in the cytoskeleton. The protein localises to the microtubule organizing center. The protein resides in the centrosome. Its subcellular location is the nucleus. Its function is as follows. Regulatory subunit of serine/threonine-protein phosphatase 4 (PP4). May regulate the activity of PPP4C at centrosomal microtubule organizing centers. This is Serine/threonine-protein phosphatase 4 regulatory subunit 3B from Mus musculus (Mouse).